The following is a 380-amino-acid chain: Beta-1,3-N-acetylglucosaminyltransferase lunatic fringe (380 aa).

Topologically, residues 1–8 are cytoplasmic; the sequence is MLKRCGRR. Residues 9 to 29 form a helical; Signal-anchor for type II membrane protein membrane-spanning segment; sequence LLLALAGALLACLLVLTADPP. Topologically, residues 30-380 are lumenal; the sequence is PPPVPAERGR…TSWCPRSAIF (351 aa). The disordered stretch occupies residues 85-110; sequence SRRDVGPPPGGAPRPADGPPRPLAEP. Positions 90 to 107 are enriched in pro residues; that stretch reads GPPPGGAPRPADGPPRPL. Residue Arg130 participates in substrate binding. Asn168 is a glycosylation site (N-linked (GlcNAc...) asparagine). Disulfide bonds link Cys169-Cys180 and Cys198-Cys261. Asp202 serves as a coordination point for substrate. A Mn(2+)-binding site is contributed by Asp203. The active site involves Asp291. Residue His315 participates in Mn(2+) binding. Cysteines 365 and 374 form a disulfide.

The protein belongs to the glycosyltransferase 31 family. It depends on Mn(2+) as a cofactor. Co(2+) serves as cofactor. A soluble form may be derived from the membrane form by proteolytic processing.

It localises to the golgi apparatus. It is found in the golgi apparatus membrane. It catalyses the reaction 3-O-(alpha-L-fucosyl)-L-threonyl-[EGF-like domain protein] + UDP-N-acetyl-alpha-D-glucosamine = 3-O-(N-acetyl-beta-D-glucosaminyl-(1-&gt;3)-alpha-L-fucosyl)-L-threonyl-[EGF-like domain protein] + UDP + H(+). It carries out the reaction 3-O-(alpha-L-fucosyl)-L-seryl-[EGF-like domain protein] + UDP-N-acetyl-alpha-D-glucosamine = 3-O-(N-acetyl-beta-D-glucosaminyl-(1-&gt;3)-alpha-L-fucosyl)-L-seryl-[EGF-like domain protein] + UDP + H(+). In terms of biological role, glycosyltransferase that initiates the elongation of O-linked fucose residues attached to EGF-like repeats in the extracellular domain of Notch molecules. Modulates NOTCH1 activity by modifying O-fucose residues at specific EGF-like domains resulting in inhibition of NOTCH1 activation by JAG1 and enhancement of NOTCH1 activation by DLL1 via an increase in its binding to DLL1. Decreases the binding of JAG1 to NOTCH2 but not that of DLL1. Essential mediator of somite segmentation and patterning. This chain is Beta-1,3-N-acetylglucosaminyltransferase lunatic fringe (LFNG), found in Bos taurus (Bovine).